The sequence spans 420 residues: DNA repair protein NreA (420 aa).

The short motif at 413–420 (QTDIFDFA) is the PIP motif element.

Belongs to the Nre family. As to quaternary structure, interacts with the DNA polymerase sliding clamp (PCNA) via the PIP (PCNA-interacting peptide) motif.

Involved in DNA damage repair. Works together with the UvrABC proteins in repairing DNA damage resulting from exposure to the DNA damaging agent mitomycin C (MMC). The sequence is that of DNA repair protein NreA from Haloferax volcanii (strain ATCC 29605 / DSM 3757 / JCM 8879 / NBRC 14742 / NCIMB 2012 / VKM B-1768 / DS2) (Halobacterium volcanii).